A 237-amino-acid chain; its full sequence is Ribose-5-phosphate isomerase A (237 aa).

Residues 32–35 (TGRT), 85–88 (DGAD), and 99–102 (KGGG) each bind substrate. Glu-108 (proton acceptor) is an active-site residue. Substrate is bound at residue Arg-126.

The protein belongs to the ribose 5-phosphate isomerase family. As to quaternary structure, homodimer.

The catalysed reaction is aldehydo-D-ribose 5-phosphate = D-ribulose 5-phosphate. It functions in the pathway carbohydrate degradation; pentose phosphate pathway; D-ribose 5-phosphate from D-ribulose 5-phosphate (non-oxidative stage): step 1/1. Catalyzes the reversible conversion of ribose-5-phosphate to ribulose 5-phosphate. The polypeptide is Ribose-5-phosphate isomerase A (Aeropyrum pernix (strain ATCC 700893 / DSM 11879 / JCM 9820 / NBRC 100138 / K1)).